Consider the following 254-residue polypeptide: Leucyl/phenylalanyl-tRNA--protein transferase (254 aa).

The protein belongs to the L/F-transferase family.

The protein resides in the cytoplasm. The enzyme catalyses N-terminal L-lysyl-[protein] + L-leucyl-tRNA(Leu) = N-terminal L-leucyl-L-lysyl-[protein] + tRNA(Leu) + H(+). It carries out the reaction N-terminal L-arginyl-[protein] + L-leucyl-tRNA(Leu) = N-terminal L-leucyl-L-arginyl-[protein] + tRNA(Leu) + H(+). The catalysed reaction is L-phenylalanyl-tRNA(Phe) + an N-terminal L-alpha-aminoacyl-[protein] = an N-terminal L-phenylalanyl-L-alpha-aminoacyl-[protein] + tRNA(Phe). In terms of biological role, functions in the N-end rule pathway of protein degradation where it conjugates Leu, Phe and, less efficiently, Met from aminoacyl-tRNAs to the N-termini of proteins containing an N-terminal arginine or lysine. This chain is Leucyl/phenylalanyl-tRNA--protein transferase, found in Burkholderia cenocepacia (strain HI2424).